Here is a 265-residue protein sequence, read N- to C-terminus: Lysosomal membrane ascorbate-dependent ferrireductase CYB561A3 (265 aa).

The Cytoplasmic segment spans residues 1–2 (MA). A helical membrane pass occupies residues 3–23 (VGWFYLSVLALCSLGSMCILF). Positions 12-219 (ALCSLGSMCI…FGLLVLYILL (208 aa)) constitute a Cytochrome b561 domain. Residues 24–45 (TIYWMRYWHGGFAWDGSMLMFN) are Lumenal-facing. A helical transmembrane segment spans residues 46-66 (WHPVLMVTGMVVLYSAASLVY). Residues histidine 47 and arginine 67 each contribute to the heme b site. The Cytoplasmic segment spans residues 67–83 (RLPQSWVGPRLPWKSGH). 2 residues coordinate L-ascorbate: arginine 76 and lysine 80. Histidine 83 contributes to the heme b binding site. The helical transmembrane segment at 84–104 (AAMHLLAFLLTVLGLHAVFEF) threads the bilayer. The Lumenal segment spans residues 105-119 (HNHAKIPHLYSLHSW). Heme b-binding positions include 112–115 (HLYS) and histidine 117. Residues 120–140 (LGITTVFLFACQWFLGFSVFL) form a helical membrane-spanning segment. Residues 141-154 (LPWASMWLRSLLKP) are Cytoplasmic-facing. Arginine 149 is a binding site for L-ascorbate. A helical transmembrane segment spans residues 155-175 (IHVFFGASILSLAIASVVSGI). 2 residues coordinate heme b: histidine 156 and glutamate 177. At 176 to 197 (NEKLFFSLKNGTKTYSNLPSEA) the chain is on the lumenal side. N-linked (GlcNAc...) asparagine glycosylation is present at asparagine 185. Residues 198–218 (VFANCAGMLVVVFGLLVLYIL) traverse the membrane as a helical segment. At 219-265 (LASSWKRPEPGMQAEREPTRTRGRAGTPEVMLEGERGLAEPLLQKRS) the chain is on the cytoplasmic side. Lysine 224 is a binding site for heme b. Positions 228 to 238 (PGMQAEREPTR) are enriched in basic and acidic residues. The segment at 228 to 265 (PGMQAEREPTRTRGRAGTPEVMLEGERGLAEPLLQKRS) is disordered.

As to quaternary structure, homodimer. Heme b serves as cofactor. Post-translationally, N-glycosylated.

It localises to the late endosome membrane. The protein resides in the lysosome membrane. The enzyme catalyses Fe(3+)(out) + L-ascorbate(in) = monodehydro-L-ascorbate radical(in) + Fe(2+)(out) + H(+). Functionally, transmembrane reductase that uses ascorbate as an electron donor in the cytoplasm and transfers electrons across membranes to reduce iron cations Fe(3+) into Fe(2+) in the lumen of the late endosome and lysosome. Reduced iron can then be extruded from the late endosome and lysosome to the cytoplasm by divalent metal-specific transporters. It is therefore most probably involved in endosomal and lysosomal cellular iron homeostasis. This is Lysosomal membrane ascorbate-dependent ferrireductase CYB561A3 from Bos taurus (Bovine).